The sequence spans 351 residues: Ion-translocating oxidoreductase complex subunit D (351 aa).

Helical transmembrane passes span 18–38 (IMLL…YFFG), 40–60 (GSLI…GAVL), 87–107 (LPPL…IVIA), and 121–141 (PAMV…TSWL). At Thr-185 the chain carries FMN phosphoryl threonine. Transmembrane regions (helical) follow at residues 211-231 (VLAG…GLLL), 241-261 (IPVS…MIAP), 264-284 (FASP…FFIA), 298-318 (LIFG…GGYP), and 320-340 (GVAF…HYTQ).

The protein belongs to the NqrB/RnfD family. In terms of assembly, the complex is composed of six subunits: RnfA, RnfB, RnfC, RnfD, RnfE and RnfG. It depends on FMN as a cofactor.

It localises to the cell inner membrane. Part of a membrane-bound complex that couples electron transfer with translocation of ions across the membrane. This chain is Ion-translocating oxidoreductase complex subunit D, found in Yersinia pseudotuberculosis serotype O:1b (strain IP 31758).